A 201-amino-acid polypeptide reads, in one-letter code: dITP/XTP pyrophosphatase (201 aa).

8–13 (TTNENK) is a substrate binding site. Residue Asp68 is the Proton acceptor of the active site. Asp68 contributes to the Mg(2+) binding site. Substrate contacts are provided by residues Ser69, 155–158 (FGYD), Lys177, and 182–183 (HR).

The protein belongs to the HAM1 NTPase family. Homodimer. Mg(2+) is required as a cofactor.

It carries out the reaction XTP + H2O = XMP + diphosphate + H(+). It catalyses the reaction dITP + H2O = dIMP + diphosphate + H(+). The catalysed reaction is ITP + H2O = IMP + diphosphate + H(+). In terms of biological role, pyrophosphatase that catalyzes the hydrolysis of nucleoside triphosphates to their monophosphate derivatives, with a high preference for the non-canonical purine nucleotides XTP (xanthosine triphosphate), dITP (deoxyinosine triphosphate) and ITP. Seems to function as a house-cleaning enzyme that removes non-canonical purine nucleotides from the nucleotide pool, thus preventing their incorporation into DNA/RNA and avoiding chromosomal lesions. The sequence is that of dITP/XTP pyrophosphatase from Borreliella burgdorferi (strain ATCC 35210 / DSM 4680 / CIP 102532 / B31) (Borrelia burgdorferi).